Reading from the N-terminus, the 199-residue chain is Holliday junction branch migration complex subunit RuvA (199 aa).

The tract at residues 1-64 is domain I; that stretch reads MIALLTGKLA…EDAINLYGFR (64 aa). Positions 65-143 are domain II; it reads TMEEKEMFQL…KLGHGPLQQD (79 aa). The tract at residues 144 to 148 is flexible linker; that stretch reads VAPAD. The segment at 149 to 199 is domain III; it reads AHNDMRDDVVSALVNLGYKEAVVQKTVDEIGVAADATVESLLKQALKKLMK.

Belongs to the RuvA family. Homotetramer. Forms an RuvA(8)-RuvB(12)-Holliday junction (HJ) complex. HJ DNA is sandwiched between 2 RuvA tetramers; dsDNA enters through RuvA and exits via RuvB. An RuvB hexamer assembles on each DNA strand where it exits the tetramer. Each RuvB hexamer is contacted by two RuvA subunits (via domain III) on 2 adjacent RuvB subunits; this complex drives branch migration. In the full resolvosome a probable DNA-RuvA(4)-RuvB(12)-RuvC(2) complex forms which resolves the HJ.

The protein resides in the cytoplasm. Its function is as follows. The RuvA-RuvB-RuvC complex processes Holliday junction (HJ) DNA during genetic recombination and DNA repair, while the RuvA-RuvB complex plays an important role in the rescue of blocked DNA replication forks via replication fork reversal (RFR). RuvA specifically binds to HJ cruciform DNA, conferring on it an open structure. The RuvB hexamer acts as an ATP-dependent pump, pulling dsDNA into and through the RuvAB complex. HJ branch migration allows RuvC to scan DNA until it finds its consensus sequence, where it cleaves and resolves the cruciform DNA. In Geotalea daltonii (strain DSM 22248 / JCM 15807 / FRC-32) (Geobacter daltonii), this protein is Holliday junction branch migration complex subunit RuvA.